The primary structure comprises 259 residues: Ribosomal RNA small subunit methyltransferase A (259 aa).

S-adenosyl-L-methionine-binding residues include Asn-13, Leu-15, Gly-40, Glu-61, Asp-85, and Asn-103.

Belongs to the class I-like SAM-binding methyltransferase superfamily. rRNA adenine N(6)-methyltransferase family. RsmA subfamily.

Its subcellular location is the cytoplasm. The enzyme catalyses adenosine(1518)/adenosine(1519) in 16S rRNA + 4 S-adenosyl-L-methionine = N(6)-dimethyladenosine(1518)/N(6)-dimethyladenosine(1519) in 16S rRNA + 4 S-adenosyl-L-homocysteine + 4 H(+). Its function is as follows. Specifically dimethylates two adjacent adenosines (A1518 and A1519) in the loop of a conserved hairpin near the 3'-end of 16S rRNA in the 30S particle. May play a critical role in biogenesis of 30S subunits. This chain is Ribosomal RNA small subunit methyltransferase A, found in Neisseria meningitidis serogroup B (strain ATCC BAA-335 / MC58).